The sequence spans 130 residues: Large ribosomal subunit protein bL19 (130 aa).

Belongs to the bacterial ribosomal protein bL19 family.

This protein is located at the 30S-50S ribosomal subunit interface and may play a role in the structure and function of the aminoacyl-tRNA binding site. The sequence is that of Large ribosomal subunit protein bL19 from Gluconobacter oxydans (strain 621H) (Gluconobacter suboxydans).